The chain runs to 178 residues: MAVAARAAAVACLLVVGLAAVAGVDGATASSPAPAPAVDCTAEALKLADCLDYVTPGKTAPSRPSKLCCGEVKGALKDSAAVGCLCAAFTSKTLPLPINITRALHLPAACGADASAFSKCLAPAPSPSVAPGTSSGSGGAAAAPAKGAAAARSPMASTTAVLVVAAAVAAPLLAFFHF.

Residues 1–26 form the signal peptide; it reads MAVAARAAAVACLLVVGLAAVAGVDG. Cystine bridges form between cysteine 50–cysteine 68 and cysteine 69–cysteine 110. N-linked (GlcNAc...) asparagine glycosylation is present at asparagine 99. Alanine 149 carries the GPI-anchor amidated alanine lipid modification. A propeptide spans 150–178 (removed in mature form); sequence AARSPMASTTAVLVVAAAVAAPLLAFFHF.

This sequence belongs to the plant LTP family. O-glycosylated on hydroxyprolines; noncontiguous hydroxylproline residues are glycosylated with arabinogalactan. Expressed in roots, stems, leaves, flowers and seeds.

The protein resides in the vacuole. It localises to the aleurone grain membrane. This is Non-specific lipid transfer protein-like 1 (LTPL1) from Oryza sativa subsp. japonica (Rice).